A 379-amino-acid polypeptide reads, in one-letter code: Probable homogentisate phytyltransferase 2, chloroplastic (379 aa).

Residues 1-39 are disordered; it reads MASLASPPLPCRAAATASRSGRPAPRLLGPPPPPASPLL. A chloroplast-targeting transit peptide spans 1–65; sequence MASLASPPLP…WSRRDAVRVC (65 aa). A run of 8 helical transmembrane segments spans residues 121–141, 174–194, 195–215, 220–240, 252–272, 299–319, 328–348, and 361–378; these read WLVF…GYIV, LVVL…GPFI, TSLY…PFRL, VAAF…GVYY, WSSP…VIAI, IAFL…AVAF, TVMV…TWVL, and YYRF…FFPL.

Belongs to the UbiA prenyltransferase family.

The protein localises to the plastid. Its subcellular location is the chloroplast thylakoid membrane. It catalyses the reaction phytyl diphosphate + homogentisate + H(+) = 2-methyl-6-phytyl-1,4-benzene-1,4-diol + CO2 + diphosphate. The protein operates within cofactor biosynthesis; tocopherol biosynthesis. Involved in the synthesis of tocopherol (vitamin E). Catalyzes the condensation of homogentisate and phytyl diphosphate to form dimethylphytylhydrquinone. The chain is Probable homogentisate phytyltransferase 2, chloroplastic (HPT2) from Oryza sativa subsp. japonica (Rice).